Consider the following 340-residue polypeptide: N(4)-(Beta-N-acetylglucosaminyl)-L-asparaginase (340 aa).

The N-terminal stretch at 1–45 (MRIIYKQQTMNNNRRDFIKKLGIATAAIAINPLEAKNLLDTSEPK) is a signal peptide. T197 (nucleophile) is an active-site residue. Residues 225 to 228 (RVGD) and 248 to 251 (TGHG) contribute to the substrate site.

This sequence belongs to the Ntn-hydrolase family. In terms of assembly, heterotetramer of two alpha and two beta chains arranged as a dimer of alpha/beta heterodimers. Post-translationally, cleaved into an alpha and beta chain by autocatalysis; this activates the enzyme. The N-terminal residue of the beta subunit is responsible for the nucleophile hydrolase activity.

It is found in the periplasm. It carries out the reaction N(4)-(beta-N-acetyl-D-glucosaminyl)-L-asparagine + H2O = N-acetyl-beta-D-glucosaminylamine + L-aspartate + H(+). Functionally, cleaves the GlcNAc-Asn bond which joins oligosaccharides to the peptide of asparagine-linked glycoproteins. Requires that the glycosylated asparagine moiety is not substituted on its N-(R1) and C- (R2) terminus. This chain is N(4)-(Beta-N-acetylglucosaminyl)-L-asparaginase, found in Elizabethkingia miricola (Chryseobacterium miricola).